We begin with the raw amino-acid sequence, 415 residues long: Esterase FrsA (415 aa).

Belongs to the FrsA family.

The enzyme catalyses a carboxylic ester + H2O = an alcohol + a carboxylate + H(+). Its function is as follows. Catalyzes the hydrolysis of esters. The polypeptide is Esterase FrsA (Serratia proteamaculans (strain 568)).